The primary structure comprises 793 residues: DNA mismatch repair protein MutS (793 aa).

Residue glycine 589–serine 596 coordinates ATP.

Belongs to the DNA mismatch repair MutS family.

This protein is involved in the repair of mismatches in DNA. It is possible that it carries out the mismatch recognition step. This protein has a weak ATPase activity. The chain is DNA mismatch repair protein MutS from Thermotoga sp. (strain RQ2).